The primary structure comprises 396 residues: Lysophospholipid transporter LplT (396 aa).

The Periplasmic segment spans residues 1-17; that stretch reads MSESVHTNTSLWSKGMK. The helical transmembrane segment at 18-38 threads the bilayer; that stretch reads AVIVAQFLSAFGDNALLFATL. Topologically, residues 39-52 are cytoplasmic; it reads ALLKAQFYPEWSQP. Residues 53–73 traverse the membrane as a helical segment; the sequence is ILQMVFVGAYILLAPFVGQVA. Residues 74–90 are Periplasmic-facing; the sequence is DSFAKGRVMMFANGLKL. A helical membrane pass occupies residues 91–111; sequence LGAASICFGINPFLGYTLVGV. Over 112-144 the chain is Cytoplasmic; sequence GAAAYSPAKYGILGELTTGSKLVKANGLMEASA. The helical transmembrane segment at 145-165 threads the bilayer; sequence IAAILLGSVAGGVLADWHVLV. A topological domain (periplasmic) is located at residue A166. Residues 167 to 187 form a helical membrane-spanning segment; it reads LAACALAYGGAVVANIYIPKL. Residues 188–225 are Cytoplasmic-facing; that stretch reads AARPGQSWNLINMTRSFLNACTSLWCNGETRFSLVGAS. Residues 226–246 form a helical membrane-spanning segment; that stretch reads LFWGAGVTLRFLLVLWVPVAL. At 247 to 255 the chain is on the periplasmic side; that stretch reads GITDNATPT. The helical transmembrane segment at 256–276 threads the bilayer; that stretch reads YLNAMVAIGIVVGAGAAAKLV. The Cytoplasmic segment spans residues 277–279; the sequence is TLE. The helical transmembrane segment at 280-300 threads the bilayer; it reads TVSRCMPAGILIGVVVLIFSL. At 301–303 the chain is on the periplasmic side; the sequence is QHE. Residues 304 to 324 traverse the membrane as a helical segment; the sequence is LLPAYALLMLIGVLGGFFVVP. Topologically, residues 325–342 are cytoplasmic; the sequence is LNALLQERGKKSVGAGNA. Residues 343–363 traverse the membrane as a helical segment; that stretch reads IAVQNLGENSAMLLMLGIYSL. At 364-365 the chain is on the periplasmic side; the sequence is AV. The helical transmembrane segment at 366-386 threads the bilayer; sequence MVGIPVVPIGIGFGALFALAI. The Cytoplasmic portion of the chain corresponds to 387–396; the sequence is TALWIWQRRH.

This sequence belongs to the major facilitator superfamily. LplT (TC 2.A.1.42) family.

The protein localises to the cell inner membrane. Its function is as follows. Catalyzes the facilitated diffusion of 2-acyl-glycero-3-phosphoethanolamine (2-acyl-GPE) into the cell. The sequence is that of Lysophospholipid transporter LplT from Shigella flexneri serotype 5b (strain 8401).